The primary structure comprises 232 residues: Large ribosomal subunit protein uL1 (232 aa).

The protein belongs to the universal ribosomal protein uL1 family. Part of the 50S ribosomal subunit.

In terms of biological role, binds directly to 23S rRNA. The L1 stalk is quite mobile in the ribosome, and is involved in E site tRNA release. Protein L1 is also a translational repressor protein, it controls the translation of the L11 operon by binding to its mRNA. The sequence is that of Large ribosomal subunit protein uL1 from Aliarcobacter butzleri (strain RM4018) (Arcobacter butzleri).